A 150-amino-acid chain; its full sequence is Large ribosomal subunit protein uL15 (150 aa).

The tract at residues Ile18 to Gly43 is disordered.

Belongs to the universal ribosomal protein uL15 family. As to quaternary structure, part of the 50S ribosomal subunit.

In terms of biological role, binds to the 23S rRNA. This Treponema denticola (strain ATCC 35405 / DSM 14222 / CIP 103919 / JCM 8153 / KCTC 15104) protein is Large ribosomal subunit protein uL15.